The following is a 106-amino-acid chain: Transcriptional and immune response regulator (106 aa).

Monomer. Interacts with NOTCH2 (via ANK repeats), the interaction inhibits the nuclear translocation of NOTCH2 N2ICD. Interacts (C-terminus) with CBY1 (C-terminus), TCIM competes with CTNNB1 for the interaction with CBY1. Ubiquitous. Expressed in thyroid papillary carcinoma. Expressed in liver, expression levels decrease in hepatocellular carcinoma. Slightly detected in normal lung, its expression is highly induced in lung cancer cells (at protein level).

It localises to the cytoplasm. The protein localises to the nucleus. The protein resides in the nucleolus. Its subcellular location is the nucleus speckle. Functionally, seems to be involved in the regulation of cell growth an differentiation, may play different and opposite roles depending on the tissue or cell type. May enhance the WNT-CTNNB1 pathway by relieving antagonistic activity of CBY1. Enhances the proliferation of follicular dendritic cells. Plays a role in the mitogen-activated MAPK2/3 signaling pathway, positively regulates G1-to-S-phase transition of the cell cycle. In endothelial cells, enhances key inflammatory mediators and inflammatory response through the modulation of NF-kappaB transcriptional regulatory activity. Involved in the regulation of heat shock response, seems to play a positive feedback with HSF1 to modulate heat-shock downstream gene expression. Plays a role in the regulation of hematopoiesis even if the mechanisms are unknown. In cancers such as thyroid or lung cancer, it has been described as promoter of cell proliferation, G1-to-S-phase transition and inhibitor of apoptosis. However, it negatively regulates self-renewal of liver cancer cells via suppresion of NOTCH2 signaling. This chain is Transcriptional and immune response regulator, found in Homo sapiens (Human).